The sequence spans 46 residues: Defensin-like protein 2 (46 aa).

Intrachain disulfides connect C3–C46, C13–C33, C19–C40, and C23–C42.

As to quaternary structure, monomer. In terms of tissue distribution, present in seeds, cotyledons and leaves. Not found in roots or stems.

Its function is as follows. Has antibacterial activity against the Gram-positive bacterium S.aureus and the Gram-negative bacteria E.coli and P.syringae. Does not have antibacterial activity against the phytopathogenic bacteria R.solanacearum, Rhataybacter sp and Erwinia sp. Does not inhibit trypsin, chymotrypsin or alpha-amylases. The polypeptide is Defensin-like protein 2 (Vigna unguiculata (Cowpea)).